The primary structure comprises 439 residues: MTHQLKSRDIIALGFMTFALFVGAGNIIFPPMVGLQAGEHVWTAAIGFLITAVGLPVLTVVALAKVGGGVDSLSTPIGKVAGLLLATVCYLAVGPLFATPRTATVSFEVGIAPLTGDSAMPLLIYSVVYFAIVILVSLYPGKLLDTVGNFLAPLKIIALVILSVAAIVWPAGPISNALDAYQNAAFSNGFVNGYLTMDTLGAMVFGIVIVNAARSRGVTEARLLTRYTVWAGLMAGVGLTLLYLALFRLGSDSATLVDQSANGAAILHAYVQHTFGGAGSFLLAALIFIACLVTAVGLTCACAEFFAQYIPLSYRTLVFILGGFSMVVSNLGLSHLIQISIPVLTAIYPPCIALVVLSFTRSWWHNSTRIIAPAMFISLLFGILDGIKASAFGDMLPAWSQRLPLAEQGLAWLMPTVVMVILAIIWDRAAGRQVTSSAH.

Residues 1–9 (MTHQLKSRD) lie on the Cytoplasmic side of the membrane. A helical membrane pass occupies residues 10-30 (IIALGFMTFALFVGAGNIIFP). The Periplasmic segment spans residues 31-43 (PMVGLQAGEHVWT). Residues 44–64 (AAIGFLITAVGLPVLTVVALA) traverse the membrane as a helical segment. At 65-79 (KVGGGVDSLSTPIGK) the chain is on the cytoplasmic side. The chain crosses the membrane as a helical span at residues 80 to 100 (VAGLLLATVCYLAVGPLFATP). At 101 to 118 (RTATVSFEVGIAPLTGDS) the chain is on the periplasmic side. A helical transmembrane segment spans residues 119 to 139 (AMPLLIYSVVYFAIVILVSLY). The Cytoplasmic portion of the chain corresponds to 140 to 149 (PGKLLDTVGN). Residues 150-170 (FLAPLKIIALVILSVAAIVWP) form a helical membrane-spanning segment. The Periplasmic portion of the chain corresponds to 171-189 (AGPISNALDAYQNAAFSNG). Residues 190–210 (FVNGYLTMDTLGAMVFGIVIV) form a helical membrane-spanning segment. Over 211–226 (NAARSRGVTEARLLTR) the chain is Cytoplasmic. Residues 227–247 (YTVWAGLMAGVGLTLLYLALF) traverse the membrane as a helical segment. Topologically, residues 248–277 (RLGSDSATLVDQSANGAAILHAYVQHTFGG) are periplasmic. Residues 278–298 (AGSFLLAALIFIACLVTAVGL) traverse the membrane as a helical segment. The Cytoplasmic portion of the chain corresponds to 299-316 (TCACAEFFAQYIPLSYRT). The chain crosses the membrane as a helical span at residues 317–337 (LVFILGGFSMVVSNLGLSHLI). A topological domain (periplasmic) is located at residue Gln-338. Residues 339 to 359 (ISIPVLTAIYPPCIALVVLSF) form a helical membrane-spanning segment. The Cytoplasmic portion of the chain corresponds to 360–369 (TRSWWHNSTR). The chain crosses the membrane as a helical span at residues 370–390 (IIAPAMFISLLFGILDGIKAS). Residues 391-404 (AFGDMLPAWSQRLP) are Periplasmic-facing. A helical membrane pass occupies residues 405–425 (LAEQGLAWLMPTVVMVILAII). At 426-439 (WDRAAGRQVTSSAH) the chain is on the cytoplasmic side.

The protein belongs to the branched chain amino acid transporter family.

It localises to the cell inner membrane. Functionally, liv-II branched chain amino acid transport system, which transports leucine, valine and isoleucine. The polypeptide is Branched-chain amino acid permease BrnQ (Salmonella typhimurium (strain LT2 / SGSC1412 / ATCC 700720)).